A 308-amino-acid chain; its full sequence is Ribosomal RNA small subunit methyltransferase H (308 aa).

S-adenosyl-L-methionine-binding positions include 33 to 35 (GGH), aspartate 52, tyrosine 81, aspartate 99, and glutamine 106.

The protein belongs to the methyltransferase superfamily. RsmH family.

The protein localises to the cytoplasm. The catalysed reaction is cytidine(1402) in 16S rRNA + S-adenosyl-L-methionine = N(4)-methylcytidine(1402) in 16S rRNA + S-adenosyl-L-homocysteine + H(+). Functionally, specifically methylates the N4 position of cytidine in position 1402 (C1402) of 16S rRNA. The sequence is that of Ribosomal RNA small subunit methyltransferase H from Francisella philomiragia subsp. philomiragia (strain ATCC 25017 / CCUG 19701 / FSC 153 / O#319-036).